The primary structure comprises 166 residues: Cytochrome c-type biogenesis protein CcmE (166 aa).

The Cytoplasmic portion of the chain corresponds to 1-13 (MNFLPKSRKARRR). A helical; Signal-anchor for type II membrane protein membrane pass occupies residues 14-34 (LTILAVAAPVVALAVGLALWG). Residues 35 to 166 (MRDAISLFYT…QGYKPGKPNT (132 aa)) lie on the Periplasmic side of the membrane. Residues H128 and Y132 each contribute to the heme site. Residues 143 to 166 (EQGEWRGDGQAPSYQGYKPGKPNT) are disordered.

The protein belongs to the CcmE/CycJ family.

The protein resides in the cell inner membrane. Its function is as follows. Heme chaperone required for the biogenesis of c-type cytochromes. Transiently binds heme delivered by CcmC and transfers the heme to apo-cytochromes in a process facilitated by CcmF and CcmH. The chain is Cytochrome c-type biogenesis protein CcmE from Caulobacter sp. (strain K31).